Consider the following 296-residue polypeptide: Alpha/beta-gliadin clone PW1215 (296 aa).

Positions 1–20 are cleaved as a signal peptide; sequence MKTFLILALLAIVATTATTA. Disordered regions lie at residues 24-126 and 220-255; these read PVPQ…QAQQ and SSQVSLQQPQQQYPSGQGFFQPSQQNPQAQGSVQPQ. Positions 25 to 36 are enriched in pro residues; the sequence is VPQPQPQNPSQP. Low complexity predominate over residues 37–58; sequence QPQGQVPLVQQQQFPGQQQQFP. Pro residues-rich tracts occupy residues 59-71 and 81-116; these read PQQPYPQPQPFPS and FPQPQPFPPQLPYPQPPPFSPQQPYPQPQPQYPQPQ. Low complexity-rich tracts occupy residues 117–126 and 220–241; these read QPISQQQAQQ and SSQVSLQQPQQQYPSGQGFFQP. The segment covering 242–255 has biased composition (polar residues); sequence SQQNPQAQGSVQPQ.

Belongs to the gliadin/glutenin family. In terms of processing, substrate of transglutaminase.

Functionally, gliadin is the major seed storage protein in wheat. The sequence is that of Alpha/beta-gliadin clone PW1215 from Triticum aestivum (Wheat).